A 197-amino-acid polypeptide reads, in one-letter code: Probable GTP-binding protein EngB (197 aa).

The EngB-type G domain maps to 22–195 (GYPEIALVGR…WNWIEAQAFG (174 aa)). GTP is bound by residues 30 to 37 (GRSNVGKS), 57 to 61 (GKTQT), 75 to 78 (DVPG), 142 to 145 (TKSD), and 174 to 176 (FSA). Residues Ser-37 and Thr-59 each coordinate Mg(2+).

It belongs to the TRAFAC class TrmE-Era-EngA-EngB-Septin-like GTPase superfamily. EngB GTPase family. Mg(2+) is required as a cofactor.

Necessary for normal cell division and for the maintenance of normal septation. The protein is Probable GTP-binding protein EngB of Levilactobacillus brevis (strain ATCC 367 / BCRC 12310 / CIP 105137 / JCM 1170 / LMG 11437 / NCIMB 947 / NCTC 947) (Lactobacillus brevis).